The chain runs to 741 residues: Type VI secretion system spike protein VgrG1b (741 aa).

Polar residues-rich tracts occupy residues 614–629 and 649–663; these read SIGA…NETI and GNQS…SRSV. Residues 614-678 are disordered; the sequence is SIGANRSESV…TSVGKDDSLD (65 aa).

It belongs to the VgrG protein family.

It localises to the secreted. In terms of biological role, part of the H1 type VI secretion system (H1-T6SS) specialized secretion system, which delivers several virulence factors in both prokaryotic and eukaryotic cells during infection. Allows the delivery of the Tse7 toxin to target cells where it exerts toxicity through its nuclease domain. The sequence is that of Type VI secretion system spike protein VgrG1b from Pseudomonas aeruginosa (strain ATCC 15692 / DSM 22644 / CIP 104116 / JCM 14847 / LMG 12228 / 1C / PRS 101 / PAO1).